Reading from the N-terminus, the 993-residue chain is Ephrin type-A receptor 7 (993 aa).

The signal sequence occupies residues 1-27 (MVLRSRLPPWIMLCSVWLLRFAHTGEA). The Extracellular portion of the chain corresponds to 28–550 (QAAKEVILLD…TAVSSEQNPV (523 aa)). One can recognise an Eph LBD domain in the interval 32-210 (EVILLDSKAQ…YYKKCWSIIE (179 aa)). Fibronectin type-III domains follow at residues 331–441 (PPSA…TGQA) and 442–537 (APSQ…TLEE). N-linked (GlcNAc...) asparagine glycans are attached at residues Asn-343 and Asn-410. Residues 551-571 (IIIAVVAVAGTIILVFMVFGF) form a helical membrane-spanning segment. At 572 to 993 (IIGRRHCGYS…LHLHGTGIQV (422 aa)) the chain is on the cytoplasmic side. A phosphotyrosine; by autocatalysis mark is found at Tyr-603 and Tyr-609. In terms of domain architecture, Protein kinase spans 628–889 (IKIERVIGAG…QIVGILDKMI (262 aa)). Residues 634 to 642 (IGAGEFGEV) and Lys-660 contribute to the ATP site. Asp-753 acts as the Proton acceptor in catalysis. Phosphotyrosine; by autocatalysis occurs at positions 786 and 935. One can recognise an SAM domain in the interval 918 to 982 (TTFCSVGEWL…MSSIQTMRAQ (65 aa)). Positions 991-993 (IQV) match the PDZ-binding motif.

Belongs to the protein kinase superfamily. Tyr protein kinase family. Ephrin receptor subfamily. Heterotetramer upon binding of the ligand. The heterotetramer is composed of an ephrin dimer and a receptor dimer. Oligomerization is probably required to induce biological responses. Phosphorylated.

It is found in the cell membrane. It carries out the reaction L-tyrosyl-[protein] + ATP = O-phospho-L-tyrosyl-[protein] + ADP + H(+). Functionally, receptor tyrosine kinase which binds promiscuously GPI-anchored ephrin-A family ligands residing on adjacent cells, leading to contact-dependent bidirectional signaling into neighboring cells. The signaling pathway downstream of the receptor is referred to as forward signaling while the signaling pathway downstream of the ephrin ligand is referred to as reverse signaling. Among GPI-anchored ephrin-A ligands, EFNA5 is a cognate/functional ligand for EPHA7 and their interaction regulates brain development modulating cell-cell adhesion and repulsion. Has a repellent activity on axons and is for instance involved in the guidance of corticothalamic axons and in the proper topographic mapping of retinal axons to the colliculus. May also regulate brain development through a caspase(CASP3)-dependent proapoptotic activity. Forward signaling may result in activation of components of the ERK signaling pathway including MAP2K1, MAP2K2, MAPK1 and MAPK3 which are phosphorylated upon activation of EPHA7. In Gallus gallus (Chicken), this protein is Ephrin type-A receptor 7 (EPHA7).